The following is a 414-amino-acid chain: MSQANLSETLFKPRFKHPETSTLVRRFNHGTQPSVQSTLDGKNVPHWYRMINRLMWIWRGIDPREILDVQARIVMSEAERTDKELYDTVIGYRGGNWIFEWSKQAMEWQQKACQETDPQRSGRHWLHASSLYNIAAYPHLKGDELAEQAQALANRAYEEAAQRLPGSLREMAFSIPGGAPVTAFLHMPKGDGPFPTVLMCGGLDSMQTDYYTLFERYFAPRGMAMLTLDMPSVGFSSKWKLTQDSSLLHQHVLKALPGVPWVDHTRVVAFGFRFGANVAVRLAYLEAPRLKAVACLGPVVHALLSDSQRQGTVPEMYLDVLASRLGMHDASDEALRVELNRYSLKVQGLLGRRCPTPMLSGFWKNDPFSPEEESRLITSSSSDGKLMEIPFNPVYRNFDTALKEITGWINHRLC.

This sequence belongs to the FrsA family.

It catalyses the reaction a carboxylic ester + H2O = an alcohol + a carboxylate + H(+). Its function is as follows. Catalyzes the hydrolysis of esters. This Citrobacter koseri (strain ATCC BAA-895 / CDC 4225-83 / SGSC4696) protein is Esterase FrsA.